Here is a 297-residue protein sequence, read N- to C-terminus: SWIRM domain-containing protein laf1 (297 aa).

2 disordered regions span residues 50–70 and 109–173; these read PKCS…KPTA and STPA…EFSS. Polar residues predominate over residues 159–173; that stretch reads QHNTRFKQSSREFSS. Positions 207-297 constitute an SWIRM domain; sequence LRSEWKGPPL…AFHDEGFFDD (91 aa).

In terms of assembly, component of the RPD3C(L) complex.

It is found in the nucleus. In terms of biological role, component of the RPD3C(L) histone deacetylase complex (HDAC) responsible for the deacetylation of lysine residues on the N-terminal part of the core histones (H2A, H2B, H3 and H4). Histone deacetylation gives a tag for epigenetic repression and plays an important role in transcriptional regulation, cell cycle progression and developmental events. This Schizosaccharomyces pombe (strain 972 / ATCC 24843) (Fission yeast) protein is SWIRM domain-containing protein laf1 (laf1).